The chain runs to 425 residues: Serine--tRNA ligase (425 aa).

227–229 contributes to the L-serine binding site; that stretch reads TAE. ATP-binding positions include 258-260 and V274; that span reads RRE. E281 contributes to the L-serine binding site. 347–350 lines the ATP pocket; the sequence is ETHS. T382 contacts L-serine.

The protein belongs to the class-II aminoacyl-tRNA synthetase family. Type-1 seryl-tRNA synthetase subfamily. In terms of assembly, homodimer. The tRNA molecule binds across the dimer.

Its subcellular location is the cytoplasm. The catalysed reaction is tRNA(Ser) + L-serine + ATP = L-seryl-tRNA(Ser) + AMP + diphosphate + H(+). It carries out the reaction tRNA(Sec) + L-serine + ATP = L-seryl-tRNA(Sec) + AMP + diphosphate + H(+). It functions in the pathway aminoacyl-tRNA biosynthesis; selenocysteinyl-tRNA(Sec) biosynthesis; L-seryl-tRNA(Sec) from L-serine and tRNA(Sec): step 1/1. Its function is as follows. Catalyzes the attachment of serine to tRNA(Ser). Is also able to aminoacylate tRNA(Sec) with serine, to form the misacylated tRNA L-seryl-tRNA(Sec), which will be further converted into selenocysteinyl-tRNA(Sec). This chain is Serine--tRNA ligase, found in Deinococcus radiodurans (strain ATCC 13939 / DSM 20539 / JCM 16871 / CCUG 27074 / LMG 4051 / NBRC 15346 / NCIMB 9279 / VKM B-1422 / R1).